The sequence spans 51 residues: MANYIDVLSFLAIICATVLATLAQDCSPEGARCVHDSECCFNECIDSLCQP.

The signal sequence occupies residues 1–23 (MANYIDVLSFLAIICATVLATLA). 3 disulfide bridges follow: cysteine 26/cysteine 40, cysteine 33/cysteine 44, and cysteine 39/cysteine 49.

This sequence belongs to the asilidin-1 family. In terms of tissue distribution, expressed by the venom gland. The most highly expressed peptides U-Asilidin1-Mar1a is around 3000 times higher expressed in the venom thoracic glands compared to its body tissues.

The protein resides in the secreted. Its function is as follows. Induces neurotoxic effect on honeybees, including slow movements, disorientation and paralysis. Since it provokes similar symptoms than omega-atracotoxin, it is probable that it acts in the same way by inhibiting voltage-gated calcium channels. This Eutolmus rufibarbis (Golden-tabbed robberfly) protein is U-Asilidin(1)-Eru1a.